Here is a 240-residue protein sequence, read N- to C-terminus: Homeobox protein DLX-4 (240 aa).

Disordered stretches follow at residues 44-70 (DLSY…DSYL) and 175-194 (LKQS…PSLS). A DNA-binding region (homeobox) is located at residues 116–175 (LRKPRTIYSSLQLQHLNQRFQHTQYLALPERAQLAAQLGLTQTQVKIWFQNKRSKYKKLL).

It belongs to the distal-less homeobox family. In terms of tissue distribution, branchial arches, molar and incisor teeth and limbs.

It localises to the nucleus. Its function is as follows. May play a role in determining the production of hemoglobin S. May act as a repressor. During embryonic development, plays a role in palatogenesis. This chain is Homeobox protein DLX-4 (Dlx4), found in Mus musculus (Mouse).